The primary structure comprises 213 residues: Orotate phosphoribosyltransferase (213 aa).

5-phospho-alpha-D-ribose 1-diphosphate is bound at residue Lys26. Residue 34–35 (FF) coordinates orotate. Residues 72–73 (YK), Arg99, Lys100, Lys103, His105, and 124–132 (DDVITAGTA) contribute to the 5-phospho-alpha-D-ribose 1-diphosphate site. Positions 128 and 156 each coordinate orotate.

It belongs to the purine/pyrimidine phosphoribosyltransferase family. PyrE subfamily. As to quaternary structure, homodimer. Requires Mg(2+) as cofactor.

It catalyses the reaction orotidine 5'-phosphate + diphosphate = orotate + 5-phospho-alpha-D-ribose 1-diphosphate. It functions in the pathway pyrimidine metabolism; UMP biosynthesis via de novo pathway; UMP from orotate: step 1/2. Its function is as follows. Catalyzes the transfer of a ribosyl phosphate group from 5-phosphoribose 1-diphosphate to orotate, leading to the formation of orotidine monophosphate (OMP). The sequence is that of Orotate phosphoribosyltransferase from Pseudomonas putida (strain W619).